Consider the following 287-residue polypeptide: Succinate--CoA ligase [ADP-forming] subunit alpha 2 (287 aa).

CoA is bound by residues 17-20 (TGYQ), Lys43, and 96-98 (ITE). Position 159 (Tyr159) interacts with substrate. His246 (tele-phosphohistidine intermediate) is an active-site residue.

It belongs to the succinate/malate CoA ligase alpha subunit family. In terms of assembly, heterotetramer of two alpha and two beta subunits.

It carries out the reaction succinate + ATP + CoA = succinyl-CoA + ADP + phosphate. It catalyses the reaction GTP + succinate + CoA = succinyl-CoA + GDP + phosphate. Its pathway is carbohydrate metabolism; tricarboxylic acid cycle; succinate from succinyl-CoA (ligase route): step 1/1. Its function is as follows. Succinyl-CoA synthetase functions in the citric acid cycle (TCA), coupling the hydrolysis of succinyl-CoA to the synthesis of either ATP or GTP and thus represents the only step of substrate-level phosphorylation in the TCA. The alpha subunit of the enzyme binds the substrates coenzyme A and phosphate, while succinate binding and nucleotide specificity is provided by the beta subunit. This is Succinate--CoA ligase [ADP-forming] subunit alpha 2 from Archaeoglobus fulgidus (strain ATCC 49558 / DSM 4304 / JCM 9628 / NBRC 100126 / VC-16).